A 239-amino-acid polypeptide reads, in one-letter code: Large ribosomal subunit protein eL32 (239 aa).

Acidic residues-rich tracts occupy residues 1–12 and 67–91; these read MSDENDTPEELA and VEADTDAEVEEVGGDDEADTDADVE. Disordered regions lie at residues 1–23 and 64–178; these read MSDENDTPEELADISGVGPSKAE and GLEV…HPSG. Basic and acidic residues predominate over residues 92 to 113; the sequence is TELRARGLTEKTPDLSEDEQRL. The span at 130–155 shows a compositional bias: basic residues; sequence YHKKKRTPTSWRRPKGTLSKQRRGIK.

This sequence belongs to the eukaryotic ribosomal protein eL32 family.

In Halobacterium salinarum (strain ATCC 700922 / JCM 11081 / NRC-1) (Halobacterium halobium), this protein is Large ribosomal subunit protein eL32 (rpl32e).